Consider the following 510-residue polypeptide: Polyamine aminopropyltransferase 2 (510 aa).

6 helical membrane-spanning segments follow: residues 6 to 26, 38 to 58, 74 to 94, 102 to 122, 140 to 160, and 165 to 185; these read ALLVLAVFVVASCGLAYELIA, ILQFSSIIGAYLFAMGIGSWV, LELLVGLFGGVSAAALFLLFA, LVLYALVTVIGVLVGMEIPLV, VLTFDYLGALAVSLLFPLVLA, and LVRTGFLFGLCNTAIAVWTLW. A PABS domain is found at 205-449; sequence AGMVGAALLA…GEWGFILAAP (245 aa). The segment at 207-456 is spermidine synthase; sequence MVGAALLAGF…AAPGRADFRP (250 aa). Q244 contacts S-methyl-5'-thioadenosine. H274 and D298 together coordinate spermidine. Residues D318 and 352-353 each bind S-methyl-5'-thioadenosine; that span reads DA. The Proton acceptor role is filled by D370.

This sequence belongs to the spermidine/spermine synthase family. In terms of assembly, homodimer or homotetramer.

Its subcellular location is the cell membrane. The enzyme catalyses S-adenosyl 3-(methylsulfanyl)propylamine + putrescine = S-methyl-5'-thioadenosine + spermidine + H(+). It participates in amine and polyamine biosynthesis; spermidine biosynthesis; spermidine from putrescine: step 1/1. In terms of biological role, catalyzes the irreversible transfer of a propylamine group from the amino donor S-adenosylmethioninamine (decarboxy-AdoMet) to putrescine (1,4-diaminobutane) to yield spermidine. The chain is Polyamine aminopropyltransferase 2 from Ralstonia nicotianae (strain ATCC BAA-1114 / GMI1000) (Ralstonia solanacearum).